A 157-amino-acid chain; its full sequence is Transcription elongation factor GreA (157 aa).

Positions 47-75 (SGEYEDAKKAQALLEGRIRELKHLLSRAE) form a coiled coil.

It belongs to the GreA/GreB family.

Functionally, necessary for efficient RNA polymerase transcription elongation past template-encoded arresting sites. The arresting sites in DNA have the property of trapping a certain fraction of elongating RNA polymerases that pass through, resulting in locked ternary complexes. Cleavage of the nascent transcript by cleavage factors such as GreA or GreB allows the resumption of elongation from the new 3'terminus. GreA releases sequences of 2 to 3 nucleotides. The chain is Transcription elongation factor GreA from Chloroflexus aurantiacus (strain ATCC 29366 / DSM 635 / J-10-fl).